Consider the following 463-residue polypeptide: Chromosomal replication initiator protein DnaA (463 aa).

Residues 1–84 form a domain I, interacts with DnaA modulators region; it reads MNTNQIILTN…QLFQHYNNAI (84 aa). Residues 84 to 124 are domain II; the sequence is IKTVEIITKELPASNQATLELPTKTFADIGSSELNSENIFS. A domain III, AAA+ region region spans residues 125–343; the sequence is TFDIRFTFDN…GALNKVIAHS (219 aa). The ATP site is built by glycine 171, glycine 173, lysine 174, and threonine 175. Positions 344 to 463 are domain IV, binds dsDNA; the sequence is NFTAKEITLE…INLMMKILQN (120 aa).

This sequence belongs to the DnaA family. Oligomerizes as a right-handed, spiral filament on DNA at oriC.

It localises to the cytoplasm. In terms of biological role, plays an essential role in the initiation and regulation of chromosomal replication. ATP-DnaA binds to the origin of replication (oriC) to initiate formation of the DNA replication initiation complex once per cell cycle. Binds the DnaA box (a 9 base pair repeat at the origin) and separates the double-stranded (ds)DNA. Forms a right-handed helical filament on oriC DNA; dsDNA binds to the exterior of the filament while single-stranded (ss)DNA is stabiized in the filament's interior. The ATP-DnaA-oriC complex binds and stabilizes one strand of the AT-rich DNA unwinding element (DUE), permitting loading of DNA polymerase. After initiation quickly degrades to an ADP-DnaA complex that is not apt for DNA replication. Binds acidic phospholipids. This is Chromosomal replication initiator protein DnaA from Rickettsia bellii (strain OSU 85-389).